Consider the following 164-residue polypeptide: UPF0304 protein HSM_1818 (164 aa).

The protein belongs to the UPF0304 family.

In Histophilus somni (strain 2336) (Haemophilus somnus), this protein is UPF0304 protein HSM_1818.